The chain runs to 302 residues: Putative glycine N-acyltransferase-like protein 1B (302 aa).

It belongs to the glycine N-acyltransferase family.

The catalysed reaction is an acyl-CoA + L-glutamine = an N(2)-acyl-L-glutamine + CoA + H(+). Its function is as follows. Putative acyltransferase which transfers an acyl group to the N-terminus of glutamine. Can use phenylacetyl-CoA as an acyl donor. This chain is Putative glycine N-acyltransferase-like protein 1B, found in Homo sapiens (Human).